The primary structure comprises 374 residues: MNFKIDKTDGNARACTLQTAHSTIQTPIFMPVGTLGAVKSLDAIDLKEILDAKIILANTYHLYLRPTSKVVREFGGLHGFSKFDRSFLTDSGGFQAFSLSKISKPDENGIKFKSHIDGSMHYFTPKSVLDTQYDLSSDIMMILDDLVALPATKERIDLSIKRTINWAKIACEYHKSNKQKSVGIDQNIFGIIQGGTDYNARKLCAEALCEMEFDGLAIGGLSVGESNEEMYDTVEALMPFIDKNRPRYLMGVGTPEDLVQNVERGVDMFDCVMPTRNARNGTLFTSFGKINIKSAAFIKDDNKIDPECDCYTCSNFSRGYLNHLYKARELTFFRLASLHNLHYYLNLVKQMREAIMQGKFKEFKREFYAKRGMI.

D90 (proton acceptor) is an active-site residue. Substrate contacts are provided by residues 90–94, D144, Q193, and G220; that span reads DSGGF. The tract at residues 251-257 is RNA binding; sequence GVGTPED. D270 acts as the Nucleophile in catalysis. The segment at 275 to 279 is RNA binding; important for wobble base 34 recognition; that stretch reads TRNAR. Zn(2+) contacts are provided by C308, C310, C313, and H339.

The protein belongs to the queuine tRNA-ribosyltransferase family. In terms of assembly, homodimer. Within each dimer, one monomer is responsible for RNA recognition and catalysis, while the other monomer binds to the replacement base PreQ1. It depends on Zn(2+) as a cofactor.

The catalysed reaction is 7-aminomethyl-7-carbaguanine + guanosine(34) in tRNA = 7-aminomethyl-7-carbaguanosine(34) in tRNA + guanine. Its pathway is tRNA modification; tRNA-queuosine biosynthesis. In terms of biological role, catalyzes the base-exchange of a guanine (G) residue with the queuine precursor 7-aminomethyl-7-deazaguanine (PreQ1) at position 34 (anticodon wobble position) in tRNAs with GU(N) anticodons (tRNA-Asp, -Asn, -His and -Tyr). Catalysis occurs through a double-displacement mechanism. The nucleophile active site attacks the C1' of nucleotide 34 to detach the guanine base from the RNA, forming a covalent enzyme-RNA intermediate. The proton acceptor active site deprotonates the incoming PreQ1, allowing a nucleophilic attack on the C1' of the ribose to form the product. After dissociation, two additional enzymatic reactions on the tRNA convert PreQ1 to queuine (Q), resulting in the hypermodified nucleoside queuosine (7-(((4,5-cis-dihydroxy-2-cyclopenten-1-yl)amino)methyl)-7-deazaguanosine). In Campylobacter fetus subsp. fetus (strain 82-40), this protein is Queuine tRNA-ribosyltransferase.